Here is a 396-residue protein sequence, read N- to C-terminus: UDP-galactose translocator (396 aa).

10 helical membrane passes run A3–L23, Y37–A57, F65–L85, L97–V117, T140–L160, W169–G189, G200–F220, L238–V258, P269–V289, and L315–V335. The tract at residues P358–D379 is disordered. Positions K392–S396 match the ER retention motif motif.

Belongs to the nucleotide-sugar transporter family. SLC35A subfamily. As to quaternary structure, interacts with SLC35A3; the interaction is reduced in the presence of SLC35A4. Found in a complex with SLC35A3 and SLC35A4. In terms of assembly, interacts with B4GALT4.

It localises to the endoplasmic reticulum membrane. It is found in the golgi apparatus membrane. It carries out the reaction UMP(out) + UDP-alpha-D-galactose(in) = UMP(in) + UDP-alpha-D-galactose(out). The enzyme catalyses UDP-N-acetyl-alpha-D-galactosamine(in) + UMP(out) = UDP-N-acetyl-alpha-D-galactosamine(out) + UMP(in). It catalyses the reaction UMP(out) + UDP-alpha-D-glucose(in) = UMP(in) + UDP-alpha-D-glucose(out). The catalysed reaction is UMP(out) + UDP-N-acetyl-alpha-D-glucosamine(in) = UMP(in) + UDP-N-acetyl-alpha-D-glucosamine(out). It carries out the reaction UDP-alpha-D-galactose(in) + AMP(out) = UDP-alpha-D-galactose(out) + AMP(in). The enzyme catalyses UDP-alpha-D-galactose(in) + CMP(out) = UDP-alpha-D-galactose(out) + CMP(in). It catalyses the reaction UDP-N-acetyl-alpha-D-galactosamine(out) + UDP-alpha-D-galactose(in) = UDP-N-acetyl-alpha-D-galactosamine(in) + UDP-alpha-D-galactose(out). The catalysed reaction is UDP-N-acetyl-alpha-D-glucosamine(out) + UDP-alpha-D-galactose(in) = UDP-N-acetyl-alpha-D-glucosamine(in) + UDP-alpha-D-galactose(out). It carries out the reaction UDP-alpha-D-galactose(in) + UDP-alpha-D-glucose(out) = UDP-alpha-D-galactose(out) + UDP-alpha-D-glucose(in). The enzyme catalyses UMP(out) + CMP(in) = UMP(in) + CMP(out). It catalyses the reaction UMP(out) + AMP(in) = UMP(in) + AMP(out). In terms of biological role, transports uridine diphosphate galactose (UDP-galactose) from the cytosol into the Golgi apparatus, functioning as an antiporter that exchanges UDP-galactose for UMP. It is also able to exchange UDP-galactose for AMP and CMP, and to transport UDP-N-acetylgalactosamine (UDP-GalNAc) and other nucleotide sugars. As a provider of UDP-galactose to galactosyltransferases present in the Golgi apparatus, it is necessary for globotriaosylceramide/globoside (Gb3Cer) synthesis from lactosylceramide. The sequence is that of UDP-galactose translocator from Homo sapiens (Human).